A 424-amino-acid polypeptide reads, in one-letter code: Serine--tRNA ligase (424 aa).

Residue 231-233 (TAE) participates in L-serine binding. 262–264 (RSE) contacts ATP. E285 contacts L-serine. 349–352 (EISS) serves as a coordination point for ATP. S385 contacts L-serine.

Belongs to the class-II aminoacyl-tRNA synthetase family. Type-1 seryl-tRNA synthetase subfamily. In terms of assembly, homodimer. The tRNA molecule binds across the dimer.

The protein resides in the cytoplasm. The enzyme catalyses tRNA(Ser) + L-serine + ATP = L-seryl-tRNA(Ser) + AMP + diphosphate + H(+). The catalysed reaction is tRNA(Sec) + L-serine + ATP = L-seryl-tRNA(Sec) + AMP + diphosphate + H(+). Its pathway is aminoacyl-tRNA biosynthesis; selenocysteinyl-tRNA(Sec) biosynthesis; L-seryl-tRNA(Sec) from L-serine and tRNA(Sec): step 1/1. Catalyzes the attachment of serine to tRNA(Ser). Is also able to aminoacylate tRNA(Sec) with serine, to form the misacylated tRNA L-seryl-tRNA(Sec), which will be further converted into selenocysteinyl-tRNA(Sec). The polypeptide is Serine--tRNA ligase (Marinobacter nauticus (strain ATCC 700491 / DSM 11845 / VT8) (Marinobacter aquaeolei)).